A 233-amino-acid polypeptide reads, in one-letter code: uncharacterized protein (233 aa).

A the nascent chain stimulates ribosomal stalling during translation by interfering with the conformation of the peptidyl transferase center (PTC), and the translating mRNA by adopting a difficult-to-decode structure at the ribosome decoding center region spans residues 196-212 (FFYEDYLIFDCRAKRRK).

In terms of biological role, acts as an endogenous target of the ribosome quality control (RQC) pathway. During translation, the nascent chain has a propensity to stall ribosomes, thereby stimulating activation of the RQC pathway. This is an uncharacterized protein from Saccharomyces cerevisiae (strain ATCC 204508 / S288c) (Baker's yeast).